The following is a 216-amino-acid chain: Serine/threonine-protein phosphatase 1 (216 aa).

Residues Asp24, His26, Asp53, and Asn79 each contribute to the Mn(2+) site. The active-site Proton donor is the His80. A Mn(2+)-binding site is contributed by His185.

This sequence belongs to the PPP phosphatase family. PP-1 subfamily. Mn(2+) is required as a cofactor.

It carries out the reaction O-phospho-L-seryl-[protein] + H2O = L-seryl-[protein] + phosphate. The catalysed reaction is O-phospho-L-threonyl-[protein] + H2O = L-threonyl-[protein] + phosphate. Inhibited by cadmium, copper, zinc when added cobalt when added concomitantly with manganese. In terms of biological role, can hydrolyze phosphorylated Ser-, Thr- or Tyr-substrates in vitro. The natural substrate is unknown. In Salmonella typhimurium (strain LT2 / SGSC1412 / ATCC 700720), this protein is Serine/threonine-protein phosphatase 1 (pphA).